A 529-amino-acid chain; its full sequence is Putative inorganic phosphate cotransporter (529 aa).

The next 8 membrane-spanning stretches (helical) occupy residues 37–57, 110–130, 148–168, 202–222, 232–252, 338–358, 429–449, and 466–486; these read FATR…AYVM, YILS…GILA, VFAF…LCAV, AVYA…GLLA, SIFY…LIFV, LPYL…DWMI, FLMS…PIAA, and IVFF…NIFG. The disordered stretch occupies residues 495–529; it reads NPEDDEQKPALQTTVTTSPARLSNGSTAPAAISSS. Residues 504-529 are compositionally biased toward polar residues; that stretch reads ALQTTVTTSPARLSNGSTAPAAISSS.

This sequence belongs to the major facilitator superfamily. Sodium/anion cotransporter family.

It is found in the membrane. May be an inorganic phosphate cotransporter. This Drosophila melanogaster (Fruit fly) protein is Putative inorganic phosphate cotransporter (Picot).